Consider the following 758-residue polypeptide: 5-methyltetrahydropteroyltriglutamate--homocysteine methyltransferase (758 aa).

5-methyltetrahydropteroyltri-L-glutamate is bound by residues R16–K19 and K112. Residues I433–S435 and E486 each bind L-homocysteine. Residues I433–S435 and E486 each bind L-methionine. 5-methyltetrahydropteroyltri-L-glutamate contacts are provided by residues R517–C518 and W563. D601 contributes to the L-homocysteine binding site. An L-methionine-binding site is contributed by D601. E607 is a binding site for 5-methyltetrahydropteroyltri-L-glutamate. Zn(2+) is bound by residues H643, C645, and E667. Catalysis depends on H696, which acts as the Proton donor. C728 provides a ligand contact to Zn(2+).

It belongs to the vitamin-B12 independent methionine synthase family. Zn(2+) is required as a cofactor.

It carries out the reaction 5-methyltetrahydropteroyltri-L-glutamate + L-homocysteine = tetrahydropteroyltri-L-glutamate + L-methionine. It functions in the pathway amino-acid biosynthesis; L-methionine biosynthesis via de novo pathway; L-methionine from L-homocysteine (MetE route): step 1/1. In terms of biological role, catalyzes the transfer of a methyl group from 5-methyltetrahydrofolate to homocysteine resulting in methionine formation. The protein is 5-methyltetrahydropteroyltriglutamate--homocysteine methyltransferase of Neisseria meningitidis serogroup C / serotype 2a (strain ATCC 700532 / DSM 15464 / FAM18).